A 312-amino-acid polypeptide reads, in one-letter code: tRNA dimethylallyltransferase (312 aa).

Residue glycine 11–threonine 18 coordinates ATP. Threonine 13–threonine 18 lines the substrate pocket. Residues aspartate 36–cysteine 39 are interaction with substrate tRNA.

This sequence belongs to the IPP transferase family. In terms of assembly, monomer. The cofactor is Mg(2+).

The catalysed reaction is adenosine(37) in tRNA + dimethylallyl diphosphate = N(6)-dimethylallyladenosine(37) in tRNA + diphosphate. In terms of biological role, catalyzes the transfer of a dimethylallyl group onto the adenine at position 37 in tRNAs that read codons beginning with uridine, leading to the formation of N6-(dimethylallyl)adenosine (i(6)A). This is tRNA dimethylallyltransferase from Caldicellulosiruptor bescii (strain ATCC BAA-1888 / DSM 6725 / KCTC 15123 / Z-1320) (Anaerocellum thermophilum).